A 786-amino-acid chain; its full sequence is Ribosome biogenesis protein BOP1 homolog (786 aa).

Positions 1–11 (MAKKSAIKRKV) are enriched in basic residues. The segment at 1-161 (MAKKSAIKRK…NSDTSDEEDI (161 aa)) is disordered. Residues 17–26 (INEQASVSEQ) show a composition bias toward polar residues. Composition is skewed to acidic residues over residues 44–53 (EDTTDDEGID), 60–72 (TSDDLLFESDEEG), and 82–114 (SGEDEQGEEDDNDDEEEEDEDEEESGSSDDDAK). The span at 122–135 (KATLSKTTGDSSNI) shows a compositional bias: polar residues. Basic and acidic residues predominate over residues 141 to 150 (PRRDPSKPEY). Acidic residues predominate over residues 151 to 160 (ENSDTSDEED). WD repeat units follow at residues 447–488 (GHTD…RTIE), 490–528 (NDVVRCVAWCPNAKLSIIAVATGTRLLLINPKVGDKLLV), 572–614 (THFK…SQIP), 617–655 (KSKGLIQCVLFHPVKPCFFVATQHNIRIYDLVKQELIKK), 658–697 (TNSKWISGMSIHPKGDNLLVSTYDKKMLWFDLDLSTKPYQ), 701–740 (LHRNAVRSIAFHLRYPLFASGSDDQAVIVSHGMVYNDLLQ), and 756–786 (RDEFGVLDVNWHPVQPWIFSTGADCTIRLYT).

The protein belongs to the WD repeat BOP1/ERB1 family.

It localises to the nucleus. The protein resides in the nucleolus. Its subcellular location is the nucleoplasm. Its function is as follows. Required for maturation of ribosomal RNAs and formation of the large ribosomal subunit. The polypeptide is Ribosome biogenesis protein BOP1 homolog (Drosophila grimshawi (Hawaiian fruit fly)).